Here is a 123-residue protein sequence, read N- to C-terminus: UPF0212 protein rrnAC0441 (123 aa).

It belongs to the UPF0212 family.

The polypeptide is UPF0212 protein rrnAC0441 (Haloarcula marismortui (strain ATCC 43049 / DSM 3752 / JCM 8966 / VKM B-1809) (Halobacterium marismortui)).